A 96-amino-acid chain; its full sequence is RING finger protein Z (96 aa).

Over residues 1 to 10 (MGNCRSKQES) the composition is skewed to basic and acidic residues. The tract at residues 1–21 (MGNCRSKQESHPICPNTQTPE) is disordered. G2 is lipidated: N-myristoyl glycine; by host. The RING-type; atypical zinc-finger motif lies at 41–77 (CKCCWFADRNLINCSDHYLCLRCLNVMLRTSNLCNIC). Residues 91-94 (PTAP) carry the PTAP/PSAP motif motif.

The protein belongs to the arenaviridae Z protein family. Interacts with protein NP; this interaction probably directs the encapsidated genome to budding sites. Interacts (via RING domain) with polymerase L; this interaction inhibits viral transcription and replication, Z partially blocks the product exit tunnel for the releasing nascent RNA product. Interacts with the glycoprotein complex; this interaction plays a role in virion budding. Interacts with host eIF4E; this interaction results in eIF4E reduced affinity for its substrate, the 5'-m7 G cap structure. Interacts (via late-budding domain) with host TSG101; this interaction is essential for budding and release of viral particles. Interacts with host RPLP0; this interaction may serve to load ribosome-like particles inside the virion. Interacts with host PML; this interaction induces PML bodies redistribution in the cytoplasm upon viral infection. Post-translationally, myristoylation is required for the role of RING finger protein Z in assembly and budding.

It is found in the virion. It localises to the host cytoplasm. The protein localises to the host perinuclear region. The protein resides in the host cell membrane. Functionally, plays a crucial role in virion assembly and budding. Expressed late in the virus life cycle, it acts as an inhibitor of viral transcription and RNA synthesis by interacting with the viral polymerase L. Presumably recruits the NP encapsidated genome to cellular membranes at budding sites via direct interaction with NP. Plays critical roles in the final steps of viral release by interacting with host TSG101, a member of the vacuolar protein-sorting pathway and using other cellular host proteins involved in vesicle formation pathway. The budding of the virus progeny occurs after association of protein Z with the viral glycoprotein complex SSP-GP1-GP2 at the cell periphery, step that requires myristoylation of protein Z. Also selectively represses protein production by associating with host eIF4E. In cell-based minigenome assay, has an inhibitory effect on the ribonucleoprotein machinery (vRNP), which is responsible for the replication and transcription of the viral genome. The protein is RING finger protein Z of Hylaeamys megacephalus (Large-headed rice rat).